The primary structure comprises 165 residues: Phosphopantetheine adenylyltransferase (165 aa).

Thr-9 contacts substrate. Residues Thr-9 to Phe-10 and His-17 contribute to the ATP site. Substrate is bound by residues Lys-41, Leu-78, and Arg-92. Residues Gly-93 to Arg-95, Glu-103, and Arg-128 to Lys-134 contribute to the ATP site.

The protein belongs to the bacterial CoaD family. Homohexamer. Mg(2+) is required as a cofactor.

It localises to the cytoplasm. The catalysed reaction is (R)-4'-phosphopantetheine + ATP + H(+) = 3'-dephospho-CoA + diphosphate. It functions in the pathway cofactor biosynthesis; coenzyme A biosynthesis; CoA from (R)-pantothenate: step 4/5. Reversibly transfers an adenylyl group from ATP to 4'-phosphopantetheine, yielding dephospho-CoA (dPCoA) and pyrophosphate. The chain is Phosphopantetheine adenylyltransferase from Ruegeria pomeroyi (strain ATCC 700808 / DSM 15171 / DSS-3) (Silicibacter pomeroyi).